A 309-amino-acid chain; its full sequence is uncharacterized protein (309 aa).

Residues 1 to 32 constitute a signal peptide (tat-type signal); sequence MTGTAPVSRRQYLGTAGAIIGTTAGCLTGADA.

This sequence belongs to the bacterial solute-binding protein 1 family. WtpA subfamily. Predicted to be exported by the Tat system. The position of the signal peptide cleavage has not been experimentally proven.

This is an uncharacterized protein from Halobacterium salinarum (strain ATCC 700922 / JCM 11081 / NRC-1) (Halobacterium halobium).